A 275-amino-acid chain; its full sequence is Myoblast determination protein 1 homolog (275 aa).

The region spanning 84–135 (DRRKAATMRERRRLSKVNDAFETLKRCTSTNPNQRLPKVEILRNAISYIESL) is the bHLH domain. Positions 234–275 (EGHEESPCSPHEGSVLSDTGTTAPSPTSCPQQQAQETIYQVL) are disordered. Positions 249 to 275 (LSDTGTTAPSPTSCPQQQAQETIYQVL) are enriched in polar residues.

In terms of assembly, efficient DNA binding requires dimerization with another bHLH protein. In terms of tissue distribution, from mid-gastrula to just before somite formation, expressed in cells adjacent to axial mesoderm. Subsequently, during the anterior-to-posterior wave of somite formation and maturation, expressed within particular regions of each somite. Expressed in both muscle and non-muscle cells.

Its subcellular location is the nucleus. In terms of biological role, may act as a transcriptional activator that promotes transcription of muscle-specific target genes and plays a role in muscle differentiation. This chain is Myoblast determination protein 1 homolog (myod1), found in Danio rerio (Zebrafish).